The following is a 379-amino-acid chain: Chaperone protein DnaJ (379 aa).

Residues Asp-5–Gly-70 form the J domain. The CR-type zinc finger occupies Gly-134 to Ser-212. 8 residues coordinate Zn(2+): Cys-147, Cys-150, Cys-164, Cys-167, Cys-186, Cys-189, Cys-200, and Cys-203. CXXCXGXG motif repeat units follow at residues Cys-147–Gly-154, Cys-164–Gly-171, Cys-186–Gly-193, and Cys-200–Gly-207.

The protein belongs to the DnaJ family. In terms of assembly, homodimer. Requires Zn(2+) as cofactor.

It localises to the cytoplasm. Participates actively in the response to hyperosmotic and heat shock by preventing the aggregation of stress-denatured proteins and by disaggregating proteins, also in an autonomous, DnaK-independent fashion. Unfolded proteins bind initially to DnaJ; upon interaction with the DnaJ-bound protein, DnaK hydrolyzes its bound ATP, resulting in the formation of a stable complex. GrpE releases ADP from DnaK; ATP binding to DnaK triggers the release of the substrate protein, thus completing the reaction cycle. Several rounds of ATP-dependent interactions between DnaJ, DnaK and GrpE are required for fully efficient folding. Also involved, together with DnaK and GrpE, in the DNA replication of plasmids through activation of initiation proteins. The protein is Chaperone protein DnaJ of Salmonella agona (strain SL483).